Here is a 152-residue protein sequence, read N- to C-terminus: Protein-export protein SecB (152 aa).

It belongs to the SecB family. Homotetramer, a dimer of dimers. One homotetramer interacts with 1 SecA dimer.

It is found in the cytoplasm. In terms of biological role, one of the proteins required for the normal export of preproteins out of the cell cytoplasm. It is a molecular chaperone that binds to a subset of precursor proteins, maintaining them in a translocation-competent state. It also specifically binds to its receptor SecA. This chain is Protein-export protein SecB, found in Rickettsia africae (strain ESF-5).